The primary structure comprises 303 residues: Histone deacetylase HDT2 (303 aa).

Residues 100 to 112 are compositionally biased toward acidic residues; that stretch reads EMDLDSEDEEEEL. Residues 100 to 282 form a disordered region; the sequence is EMDLDSEDEE…SGGSVPCKSC (183 aa). A compositionally biased stretch (basic and acidic residues) spans 119–133; sequence ENGKADGKEEQKNQE. Residues 154–203 are compositionally biased toward acidic residues; the sequence is DSDDSDEDESDDSDEDDSDDSDEGEGLSPDEGDDDSSDEDDTSDDDEEET. Positions 204–217 are enriched in basic and acidic residues; that stretch reads PTPKKPEAGKKRGA. The C2H2-type zinc finger occupies 277 to 300; that stretch reads VPCKSCSKTFNSEMALQAHSKAKH.

It belongs to the histone deacetylase HD2 family. Multimer. Possibly forms a homotrimer with HDT1 and/or HDT3.

It is found in the nucleus. The protein localises to the nucleolus. Its function is as follows. Mediates the deacetylation of lysine residues on the N-terminal part of the core histones (H2A, H2B, H3 and H4). Histone deacetylation gives a tag for epigenetic repression and plays an important role in transcriptional regulation, cell cycle progression and developmental events. The chain is Histone deacetylase HDT2 (HDT2) from Zea mays (Maize).